We begin with the raw amino-acid sequence, 367 residues long: Glycolate oxidase 1 (367 aa).

The residue at position 1 (Met1) is an N-acetylmethionine. Position 24 (Tyr24) interacts with glyoxylate. FMN-binding positions include Pro77–Ala79, Ser106, Gln127–Tyr129, and Thr155. Residue Tyr129 coordinates glyoxylate. A glyoxylate-binding site is contributed by Arg164. Residues Lys230 and Ser252 each coordinate FMN. Glyoxylate-binding residues include His254 and Arg257. His254 (proton acceptor) is an active-site residue. FMN is bound by residues Asp285–Arg289 and Gly308–Arg309.

This sequence belongs to the FMN-dependent alpha-hydroxy acid dehydrogenase family. As to quaternary structure, homotetramer. The cofactor is FMN.

It is found in the peroxisome. It catalyses the reaction glycolate + O2 = glyoxylate + H2O2. It participates in photosynthesis; photorespiration; glycine from 2-phosphoglycolate: step 2/3. In terms of biological role, catalyzes the oxidation of glycolate to glyoxylate, with a reduction of O2 to H2O2. Is a key enzyme in photorespiration in green plants. In Arabidopsis thaliana (Mouse-ear cress), this protein is Glycolate oxidase 1 (GLO1).